Here is a 506-residue protein sequence, read N- to C-terminus: Alpha-L-fucosidase 1 (506 aa).

Residues 1-23 (MNSQITLFFFFFSILSLSQISNS) form the signal peptide. 6 N-linked (GlcNAc...) asparagine glycosylation sites follow: Asn22, Asn82, Asn248, Asn320, Asn355, and Asn487.

It belongs to the glycosyl hydrolase 29 family.

It is found in the secreted. The protein localises to the extracellular space. It localises to the apoplast. The enzyme catalyses an alpha-L-fucoside + H2O = L-fucose + an alcohol. Functionally, hydrolyzes both 3- and 4-linked fucoses in Lewis determinants. Not active on neither 2-linked fucose nor on fucose in alpha-1,3-linkage to the innermost GlcNAc. The chain is Alpha-L-fucosidase 1 (FUC1) from Arabidopsis thaliana (Mouse-ear cress).